Consider the following 214-residue polypeptide: Adenylate kinase (214 aa).

Residue 12-17 (GVGKGT) coordinates ATP. The segment at 32-61 (STGNIFRSQIASNSELGIKLKEIVESGGYV) is NMP. Residues threonine 33, arginine 38, 59-61 (GYV), 88-91 (GYPR), and glutamine 95 each bind AMP. The segment at 126-163 (GRRICPSCNAQYHIYFKKSKLDTKCEIDQSELIQRKDD) is LID. ATP is bound at residue arginine 127. Residues cysteine 130, cysteine 133, cysteine 150, and aspartate 153 each contribute to the Zn(2+) site. AMP contacts are provided by arginine 160 and arginine 171. Lysine 199 provides a ligand contact to ATP.

The protein belongs to the adenylate kinase family. As to quaternary structure, monomer.

The protein localises to the cytoplasm. It carries out the reaction AMP + ATP = 2 ADP. It functions in the pathway purine metabolism; AMP biosynthesis via salvage pathway; AMP from ADP: step 1/1. Functionally, catalyzes the reversible transfer of the terminal phosphate group between ATP and AMP. Plays an important role in cellular energy homeostasis and in adenine nucleotide metabolism. This is Adenylate kinase from Mycoplasmopsis pulmonis (strain UAB CTIP) (Mycoplasma pulmonis).